The primary structure comprises 431 residues: Serine--tRNA ligase (431 aa).

235 to 237 (TAE) lines the L-serine pocket. ATP is bound by residues 266–268 (RRE) and Val-282. Position 289 (Glu-289) interacts with L-serine. 353–356 (EASS) is a binding site for ATP. Ser-389 contacts L-serine.

This sequence belongs to the class-II aminoacyl-tRNA synthetase family. Type-1 seryl-tRNA synthetase subfamily. In terms of assembly, homodimer. The tRNA molecule binds across the dimer.

The protein localises to the cytoplasm. The catalysed reaction is tRNA(Ser) + L-serine + ATP = L-seryl-tRNA(Ser) + AMP + diphosphate + H(+). It catalyses the reaction tRNA(Sec) + L-serine + ATP = L-seryl-tRNA(Sec) + AMP + diphosphate + H(+). The protein operates within aminoacyl-tRNA biosynthesis; selenocysteinyl-tRNA(Sec) biosynthesis; L-seryl-tRNA(Sec) from L-serine and tRNA(Sec): step 1/1. Catalyzes the attachment of serine to tRNA(Ser). Is also able to aminoacylate tRNA(Sec) with serine, to form the misacylated tRNA L-seryl-tRNA(Sec), which will be further converted into selenocysteinyl-tRNA(Sec). The sequence is that of Serine--tRNA ligase from Chlorobium phaeobacteroides (strain DSM 266 / SMG 266 / 2430).